Here is an 891-residue protein sequence, read N- to C-terminus: Protein translocase subunit SecA 1 (891 aa).

Residues Q85, 103 to 107 (GEGKT), and D491 contribute to the ATP site. Zn(2+) is bound by residues C877, C879, C888, and C889.

It belongs to the SecA family. As to quaternary structure, monomer and homodimer. Part of the essential Sec protein translocation apparatus which comprises SecA, SecYEG and auxiliary proteins SecDF. Other proteins may also be involved. It depends on Zn(2+) as a cofactor.

The protein resides in the cell membrane. The protein localises to the cytoplasm. It carries out the reaction ATP + H2O + cellular proteinSide 1 = ADP + phosphate + cellular proteinSide 2.. Functionally, part of the Sec protein translocase complex. Interacts with the SecYEG preprotein conducting channel. Has a central role in coupling the hydrolysis of ATP to the transfer of proteins into and across the cell membrane, serving as an ATP-driven molecular motor driving the stepwise translocation of polypeptide chains across the membrane. In Clostridioides difficile (strain 630) (Peptoclostridium difficile), this protein is Protein translocase subunit SecA 1.